The chain runs to 576 residues: Septation ring formation regulator EzrA (576 aa).

Over Met1–Ile7 the chain is Extracellular. Residues Leu8–Met26 traverse the membrane as a helical segment. Topologically, residues Arg27–Leu576 are cytoplasmic. Coiled-coil stretches lie at residues Arg105–Leu134 and Glu277–Ile301.

Belongs to the EzrA family.

The protein localises to the cell membrane. Functionally, negative regulator of FtsZ ring formation; modulates the frequency and position of FtsZ ring formation. Inhibits FtsZ ring formation at polar sites. Interacts either with FtsZ or with one of its binding partners to promote depolymerization. The chain is Septation ring formation regulator EzrA from Lactococcus lactis subsp. lactis (strain IL1403) (Streptococcus lactis).